The chain runs to 546 residues: MQFVEFAEICNTIEGTSSRLATADILAEKFPLLTEEELPVFVRFMRGRLFPDWSSEKLGFGPNLLYDALAYVIGKKRSYVVSAINNAGDIGKVVESLIEKREQTMFFSEELDLLDVNARFLQMAKSSGRRSQQERLRSAQYLLSNATPLEGRYLARLMLEEMRIGVGEGVVKDAVSKAFGVPSDIVEHAHQALNDLGEVAFLAKTDPSRLSNVHITAFRPVKMMLAQQGSITSMVETHGTLAAENKYDGSRFQFHKSGGKCAIYSRRLEEMTASLPDVVKMLDKATDHDVIIDGEVIAIMNGKPMPFQTILRRIRRKHDVGDAQEAITLLPWVFDILAADGETLIDLPFRERRKILESVMNAYVAPQLVSDSAEEIEAYYHSSLDNGNEGIMLKVLDSPYLPGNRGKLWIKIKPEVDTIDLVVTAAEWGEGKRAKMFGSFLLACQDENGDLLEISRVATGIDDSMLSTLYDLFKDKIIAEKGKTVTFEPDVVFEVGYAELQKSTNYEAGYALRFPRFVRLRDDKDVSEIETLESLTRRYSLQNKEE.

Residue glutamate 244 participates in ATP binding. The N6-AMP-lysine intermediate role is filled by lysine 246. Residues arginine 251, arginine 266, glutamate 295, phenylalanine 334, arginine 405, and lysine 411 each contribute to the ATP site.

Belongs to the ATP-dependent DNA ligase family. The cofactor is Mg(2+).

The enzyme catalyses ATP + (deoxyribonucleotide)n-3'-hydroxyl + 5'-phospho-(deoxyribonucleotide)m = (deoxyribonucleotide)n+m + AMP + diphosphate.. In terms of biological role, DNA ligase that seals nicks in double-stranded DNA during DNA replication, DNA recombination and DNA repair. The chain is DNA ligase from Methanocorpusculum labreanum (strain ATCC 43576 / DSM 4855 / Z).